A 167-amino-acid chain; its full sequence is Urease accessory protein UreE (167 aa).

This sequence belongs to the UreE family.

It localises to the cytoplasm. In terms of biological role, involved in urease metallocenter assembly. Binds nickel. Probably functions as a nickel donor during metallocenter assembly. This is Urease accessory protein UreE from Pseudomonas paraeruginosa (strain DSM 24068 / PA7) (Pseudomonas aeruginosa (strain PA7)).